Consider the following 673-residue polypeptide: Ribonucleoprotein PTB-binding 2 (673 aa).

Gly residues predominate over residues 1-17 (MAARGGGAGGAGSGSGP). Residues 1 to 34 (MAARGGGAGGAGSGSGPSAGTAGEAAEPALRPGE) are disordered. A compositionally biased stretch (low complexity) spans 18–29 (SAGTAGEAAEPA). 3 consecutive RRM domains span residues 58–129 (RKIL…LQPT), 131–209 (ALLC…WMDV), and 220–298 (KCLC…FCAP). Residues 481–549 (QLPAGQAGPG…KGTEVASKNQ (69 aa)) form a disordered region. The segment covering 499-512 (SASVSISEASFSGS) has biased composition (low complexity). A compositionally biased stretch (polar residues) spans 529-549 (TGNQKTPQSQPKGTEVASKNQ).

In terms of assembly, interacts with PTBP1 and RAVER1. In terms of tissue distribution, expressed throughout embryogenesis. Detected at low levels in adult lung, brain and kidney, but not in the other tissues tested.

Its subcellular location is the nucleus. It localises to the cytoplasm. In terms of biological role, may bind single-stranded nucleic acids. The polypeptide is Ribonucleoprotein PTB-binding 2 (Raver2) (Mus musculus (Mouse)).